A 457-amino-acid polypeptide reads, in one-letter code: Siroheme synthase (457 aa).

Residues 1–204 form a precorrin-2 dehydrogenase /sirohydrochlorin ferrochelatase region; it reads MDHLPIFCQL…ADEKAVNATT (204 aa). Residues 22–23 and 43–44 each bind NAD(+); these read DV and LT. Ser-128 carries the post-translational modification Phosphoserine. The tract at residues 216–457 is uroporphyrinogen-III C-methyltransferase; that stretch reads GEVVLVGAGP…RDKLNWFSNY (242 aa). Pro-225 is a binding site for S-adenosyl-L-methionine. The active-site Proton acceptor is Asp-248. The active-site Proton donor is Lys-270. S-adenosyl-L-methionine contacts are provided by residues 301 to 303, Ile-306, 331 to 332, Met-382, and Gly-411; these read GGD and TA.

The protein in the N-terminal section; belongs to the precorrin-2 dehydrogenase / sirohydrochlorin ferrochelatase family. This sequence in the C-terminal section; belongs to the precorrin methyltransferase family.

It catalyses the reaction uroporphyrinogen III + 2 S-adenosyl-L-methionine = precorrin-2 + 2 S-adenosyl-L-homocysteine + H(+). It carries out the reaction precorrin-2 + NAD(+) = sirohydrochlorin + NADH + 2 H(+). The enzyme catalyses siroheme + 2 H(+) = sirohydrochlorin + Fe(2+). The protein operates within cofactor biosynthesis; adenosylcobalamin biosynthesis; precorrin-2 from uroporphyrinogen III: step 1/1. Its pathway is cofactor biosynthesis; adenosylcobalamin biosynthesis; sirohydrochlorin from precorrin-2: step 1/1. It participates in porphyrin-containing compound metabolism; siroheme biosynthesis; precorrin-2 from uroporphyrinogen III: step 1/1. It functions in the pathway porphyrin-containing compound metabolism; siroheme biosynthesis; siroheme from sirohydrochlorin: step 1/1. The protein operates within porphyrin-containing compound metabolism; siroheme biosynthesis; sirohydrochlorin from precorrin-2: step 1/1. Multifunctional enzyme that catalyzes the SAM-dependent methylations of uroporphyrinogen III at position C-2 and C-7 to form precorrin-2 via precorrin-1. Then it catalyzes the NAD-dependent ring dehydrogenation of precorrin-2 to yield sirohydrochlorin. Finally, it catalyzes the ferrochelation of sirohydrochlorin to yield siroheme. The sequence is that of Siroheme synthase from Salmonella dublin (strain CT_02021853).